We begin with the raw amino-acid sequence, 116 residues long: Phosphoribosyl-AMP cyclohydrolase (116 aa).

A Mg(2+)-binding site is contributed by Asp85. Cys86 provides a ligand contact to Zn(2+). 2 residues coordinate Mg(2+): Asp87 and Asp89. 2 residues coordinate Zn(2+): Cys102 and Cys109.

Belongs to the PRA-CH family. Homodimer. Mg(2+) serves as cofactor. Zn(2+) is required as a cofactor.

The protein resides in the cytoplasm. It catalyses the reaction 1-(5-phospho-beta-D-ribosyl)-5'-AMP + H2O = 1-(5-phospho-beta-D-ribosyl)-5-[(5-phospho-beta-D-ribosylamino)methylideneamino]imidazole-4-carboxamide. Its pathway is amino-acid biosynthesis; L-histidine biosynthesis; L-histidine from 5-phospho-alpha-D-ribose 1-diphosphate: step 3/9. In terms of biological role, catalyzes the hydrolysis of the adenine ring of phosphoribosyl-AMP. This Thermobifida fusca (strain YX) protein is Phosphoribosyl-AMP cyclohydrolase.